The following is a 366-amino-acid chain: Chorismate synthase (366 aa).

NADP(+) contacts are provided by Arg48 and Arg54. Residues 125 to 127 (RSS), 238 to 239 (NA), Gly278, 293 to 297 (KPTSS), and Arg319 contribute to the FMN site.

It belongs to the chorismate synthase family. In terms of assembly, homotetramer. FMNH2 serves as cofactor.

The enzyme catalyses 5-O-(1-carboxyvinyl)-3-phosphoshikimate = chorismate + phosphate. The protein operates within metabolic intermediate biosynthesis; chorismate biosynthesis; chorismate from D-erythrose 4-phosphate and phosphoenolpyruvate: step 7/7. In terms of biological role, catalyzes the anti-1,4-elimination of the C-3 phosphate and the C-6 proR hydrogen from 5-enolpyruvylshikimate-3-phosphate (EPSP) to yield chorismate, which is the branch point compound that serves as the starting substrate for the three terminal pathways of aromatic amino acid biosynthesis. This reaction introduces a second double bond into the aromatic ring system. This chain is Chorismate synthase, found in Paraburkholderia xenovorans (strain LB400).